Reading from the N-terminus, the 37-residue chain is Large ribosomal subunit protein bL36 (37 aa).

The protein belongs to the bacterial ribosomal protein bL36 family.

This Mycoplasma genitalium (strain ATCC 33530 / DSM 19775 / NCTC 10195 / G37) (Mycoplasmoides genitalium) protein is Large ribosomal subunit protein bL36.